We begin with the raw amino-acid sequence, 341 residues long: Malate dehydrogenase 2, mitochondrial (341 aa).

The transit peptide at 1–22 (MFRSMIVRSASPVKQGLLRRGF) directs the protein to the mitochondrion. NAD(+) is bound by residues 36–42 (GAAGGIG) and aspartate 62. Substrate-binding residues include arginine 109 and arginine 115. Residues asparagine 122 and 145-147 (ISN) contribute to the NAD(+) site. The substrate site is built by asparagine 147 and arginine 181. Histidine 205 serves as the catalytic Proton acceptor. Residue methionine 256 coordinates NAD(+).

This sequence belongs to the LDH/MDH superfamily. MDH type 1 family. Homodimer. As to expression, expressed in rosette leaves at low levels.

The protein resides in the mitochondrion matrix. The enzyme catalyses (S)-malate + NAD(+) = oxaloacetate + NADH + H(+). Catalyzes a reversible NAD-dependent dehydrogenase reaction involved in central metabolism and redox homeostasis between organelle compartments. Required for carbon dioxide and energy partitioning in leaves. May limit photorespiration during the dark phase. Can convert 2-ketoglutarate to L-2-hydroxyglutarate in vitro. The polypeptide is Malate dehydrogenase 2, mitochondrial (Arabidopsis thaliana (Mouse-ear cress)).